Here is a 426-residue protein sequence, read N- to C-terminus: MSRIKIILLACMLALLFSGCVENSAVFEKNTATLKENTINADSVRGYDIASANNAFAFDMYSQLTQQVTGDYENILFSPYSISAAMAICYEGAENTTKEQISNVFYFPTNKTVLKVRLERINDRINSGSGDYELQTANALWIQEGYPVKEEYLFNVKKYYDGEVANLDFVRKPDDSRNTINEWVETRTSDKIKDLVPKSMITPDTRIIITNAIYFNGKWAYTFDKQLTEKRAFYPANGEEASVDMMYMYNNFNYGENSKAKIIELPYKGNDLSMYIVLPKDNNIKEFETEFTINDYTELKNEMDSTVNVDILIPKFKFETKTELSDSFVEMGVVDAFRQANFSGISNSPLKVSEVIHQTFIDVKEEGTEAAAATGVGMTVGMDFSWDSKQREFKADHPFMFFIEDRRTNCILFMGKVEYPEYKNDT.

The protein belongs to the serpin family.

This is an uncharacterized protein from Methanosarcina mazei (strain ATCC BAA-159 / DSM 3647 / Goe1 / Go1 / JCM 11833 / OCM 88) (Methanosarcina frisia).